Consider the following 940-residue polypeptide: Insulin receptor substrate 1 (940 aa).

One can recognise a PH domain in the interval 8-109 (GMVLSGYHKK…WLDKLLLLQR (102 aa)). The IRS-type PTB domain occupies 122 to 236 (YEHVWQVIIQ…SAMSAKTDSN (115 aa)). Phosphoserine occurs at positions 284, 285, and 340. The residue at position 407 (tyrosine 407) is a Phosphotyrosine; by INSR. The YXXM motif 1 motif lies at 407–410 (YIPM). Residues 523 to 540 (NRSQNNISKEGPISGTST) show a composition bias toward polar residues. A disordered region spans residues 523 to 549 (NRSQNNISKEGPISGTSTNREKKSTSA). Position 548 is a phosphoserine (serine 548). Positions 639–642 (YLEM) match the YXXM motif 2 motif. Tyrosine 883 is subject to Phosphotyrosine; by INSR. Residues 895–915 (NPAKYLKRGSRESPPVATCAE) form a disordered region. 2 positions are modified to phosphoserine: serine 904 and serine 907. The residue at position 920 (tyrosine 920) is a Phosphotyrosine; by INSR.

As to quaternary structure, bindings to phosphatidylinositol 3-kinase and SHP2.

Its function is as follows. Activates phosphatidylinositol 3-kinase when bound to the regulatory p85 subunit. May mediate the control of various cellular processes by insulin-like peptides. When phosphorylated by the insulin receptor binds specifically to various cellular proteins containing SH2 domains. Involved in control of cell proliferation, cell size, and body and organ growth throughout development. Also has a role in a signaling pathway controlling the physiological response required to endure periods of low nutrient conditions. Insulin/insulin-like growth factor (IGF) signaling pathway has a role in regulating aging and is necessary in the ovary for vitellogenic maturation. This is Insulin receptor substrate 1 from Drosophila ananassae (Fruit fly).